We begin with the raw amino-acid sequence, 105 residues long: MVTQKIYIELKAFDHGLLDRSARNIVLVAKRSGAKVNGPIFFPRRTAKFIVNRSTHVDKKSREQFEIRTHKRLISLPKANSAILQALMSLQLPAGVDVKVKVVGG.

It belongs to the universal ribosomal protein uS10 family. In terms of assembly, part of the 30S ribosomal subunit.

Involved in the binding of tRNA to the ribosomes. This chain is Small ribosomal subunit protein uS10, found in Anaplasma phagocytophilum (strain HZ).